Reading from the N-terminus, the 58-residue chain is Large ribosomal subunit protein bL32 (58 aa).

It belongs to the bacterial ribosomal protein bL32 family.

The polypeptide is Large ribosomal subunit protein bL32 (Limosilactobacillus fermentum (strain NBRC 3956 / LMG 18251) (Lactobacillus fermentum)).